The primary structure comprises 304 residues: Non-specific ribonucleoside hydrolase RihC (304 aa).

The active site involves H233.

Belongs to the IUNH family. RihC subfamily.

Functionally, hydrolyzes both purine and pyrimidine ribonucleosides with a broad-substrate specificity. The sequence is that of Non-specific ribonucleoside hydrolase RihC from Klebsiella pneumoniae (strain 342).